A 90-amino-acid chain; its full sequence is MINIKTFFKNIFKLNRLTSIKFYAWMPGSDDLRKTEFKLGLGPCGKVVTKLECYSTSSGMVIFQTTEDNEMKSFYYPKGSTCGRIERTYS.

This is an uncharacterized protein from Escherichia coli (Bacteriophage T3).